Here is a 270-residue protein sequence, read N- to C-terminus: Regulatory protein RecX (270 aa).

Belongs to the RecX family.

Its subcellular location is the cytoplasm. Functionally, modulates RecA activity. In Bacillus cereus (strain AH187), this protein is Regulatory protein RecX.